We begin with the raw amino-acid sequence, 405 residues long: Cytoplasmic polyadenylated homeobox-like protein (405 aa).

2 disordered regions span residues 1-33 and 340-363; these read MNLD…KHRH and PWDL…QNNG. Residues 13–23 show a composition bias toward basic and acidic residues; it reads EEDHHNEERQT. A compositionally biased stretch (basic residues) spans 24–33; the sequence is KNKRKTKHRH. The segment at residues 28–87 is a DNA-binding region (homeobox); the sequence is KTKHRHKFSEELLQELKEIFGENCYPDYTTRKTLAIKFDCPVNVIDNWFQNKRARLPPAE. Positions 346 to 360 are enriched in low complexity; it reads QWSSAQSQLQSQLPQ.

It localises to the nucleus. Transcription factor that acts as activator. The sequence is that of Cytoplasmic polyadenylated homeobox-like protein from Homo sapiens (Human).